A 373-amino-acid chain; its full sequence is UDP-N-acetylenolpyruvoylglucosamine reductase (373 aa).

The FAD-binding PCMH-type domain maps to L30–D203. The active site involves R180. Residue S258 is the Proton donor of the active site. E356 is an active-site residue.

It belongs to the MurB family. FAD serves as cofactor.

It localises to the cytoplasm. The enzyme catalyses UDP-N-acetyl-alpha-D-muramate + NADP(+) = UDP-N-acetyl-3-O-(1-carboxyvinyl)-alpha-D-glucosamine + NADPH + H(+). It functions in the pathway cell wall biogenesis; peptidoglycan biosynthesis. Its function is as follows. Cell wall formation. The chain is UDP-N-acetylenolpyruvoylglucosamine reductase from Psychrobacter arcticus (strain DSM 17307 / VKM B-2377 / 273-4).